Consider the following 154-residue polypeptide: Peptide methionine sulfoxide reductase MsrB (154 aa).

Residues 28-150 enclose the MsrB domain; it reads DQQWREQLSE…NSVSLIFNKI (123 aa). Residues Cys-67, Cys-70, Cys-116, and Cys-119 each coordinate Zn(2+). The Nucleophile role is filled by Cys-139.

Belongs to the MsrB Met sulfoxide reductase family. Zn(2+) serves as cofactor.

The catalysed reaction is L-methionyl-[protein] + [thioredoxin]-disulfide + H2O = L-methionyl-(R)-S-oxide-[protein] + [thioredoxin]-dithiol. In Vibrio vulnificus (strain YJ016), this protein is Peptide methionine sulfoxide reductase MsrB.